A 338-amino-acid polypeptide reads, in one-letter code: Tryptophan--tRNA ligase (338 aa).

ATP contacts are provided by residues 12–14 (QPT) and 20–21 (GN). The 'HIGH' region signature appears at 13 to 21 (PTGDLHIGN). Asp-136 is an L-tryptophan binding site. Residues 148-150 (GED), Ile-191, and 200-204 (KMSKS) contribute to the ATP site. A 'KMSKS' region motif is present at residues 200 to 204 (KMSKS).

It belongs to the class-I aminoacyl-tRNA synthetase family. Homodimer.

It is found in the cytoplasm. It catalyses the reaction tRNA(Trp) + L-tryptophan + ATP = L-tryptophyl-tRNA(Trp) + AMP + diphosphate + H(+). Catalyzes the attachment of tryptophan to tRNA(Trp). The chain is Tryptophan--tRNA ligase from Prochlorococcus marinus subsp. pastoris (strain CCMP1986 / NIES-2087 / MED4).